The primary structure comprises 155 residues: UPF0260 protein R01011 (155 aa).

The protein belongs to the UPF0260 family.

The sequence is that of UPF0260 protein R01011 from Rhizobium meliloti (strain 1021) (Ensifer meliloti).